Reading from the N-terminus, the 486-residue chain is MAAAGAYSASLPAVPDWLNKGDNAWQLTASTLVGIQSMPGLVVLYGSIVKKKWAVNSAFMALYAYASSLLVWVLVGFRMAFGDQLLPFWGKAGVALTQSYLVGRATLPATAHGAIPRTEPFYPEATLVLFQFEFAAITLVLLAGSVLGRMNIKAWMAFTPLWLLLSYTVGAFSLWGGGFLYRWGVIDYSGGYVIHLSSGIAGFTAAYWVGPRLKSDRERFSPNNILLMIAGGGLLWMGWAGFNGGAPYAANIAASVAVLNTNVCAATSLLMWTCLDVIFFRKPSVIGAVQGMMTGLVCITPGAGLVQTWAAVVMGIFAGSVPWFTMMILHKKSALLMKVDDTLAVFHTHAVAGLLGGILTGLLATPELFSLESTVPGLRGAFYGGGIKQIGKQLGGAAFVIAWNLVVTTAILLGIGLFIPLRMPDEQLMIGDDAAHGEEAYALWGDGEKFDATRHDLSRGGGGGDRDGPAGERLSALGARGVTIQL.

Transmembrane regions (helical) follow at residues 29–49, 57–77, 127–147, 161–181, 190–210, 225–245, 252–272, 285–305, 309–329, 343–363, and 399–419; these read ASTLVGIQSMPGLVVLYGSIV, SAFMALYAYASSLLVWVLVGF, LVLFQFEFAAITLVLLAGSVL, LWLLLSYTVGAFSLWGGGFLY, GGYVIHLSSGIAGFTAAYWVG, ILLMIAGGGLLWMGWAGFNGG, IAASVAVLNTNVCAATSLLMW, VIGAVQGMMTGLVCITPGAGL, WAAVVMGIFAGSVPWFTMMIL, LAVFHTHAVAGLLGGILTGLL, and FVIAWNLVVTTAILLGIGLFI. The span at 454–470 shows a compositional bias: basic and acidic residues; sequence RHDLSRGGGGGDRDGPA. Positions 454–473 are disordered; it reads RHDLSRGGGGGDRDGPAGER.

This sequence belongs to the ammonia transporter channel (TC 1.A.11.2) family. In terms of tissue distribution, expressed in roots and leaf blades and sheaths.

Its subcellular location is the cell membrane. Involved in ammonium transport. The sequence is that of Ammonium transporter 2 member 1 (AMT2-1) from Oryza sativa subsp. japonica (Rice).